Here is a 100-residue protein sequence, read N- to C-terminus: Integration host factor subunit alpha (100 aa).

Positions Asp54–Pro73 are disordered.

The protein belongs to the bacterial histone-like protein family. As to quaternary structure, heterodimer of an alpha and a beta chain.

In terms of biological role, this protein is one of the two subunits of integration host factor, a specific DNA-binding protein that functions in genetic recombination as well as in transcriptional and translational control. This is Integration host factor subunit alpha from Pseudomonas savastanoi pv. phaseolicola (strain 1448A / Race 6) (Pseudomonas syringae pv. phaseolicola (strain 1448A / Race 6)).